The chain runs to 414 residues: MAMNFVTFNQDYSYLAVATSKGFRIFTTDPFAKSYETKEGNIAIIEMLFSTSLVALILSPRRLQITNTKRQSTICELTFPTTVLAVKLNRKRLVIVLEDQIYLYDIQTMKLLYTIETSPNPNAICALSPSSDNCYLAYPLPQKAPPSSFNPPSHAPPGSTHVSPTTGEVLIFDALKLEAINVIEAHRSPLACITLNSDGTLIATASDKGTIIRVFSVPDGHKLYQFRRGSIPSRIYSMSFNTTSTLLCVSSSTETIHLFKLSHQTSSREGSPSSALSRERAASQSSLGTSPDPDDPTDDMESSEIASRKHNGTLMGMIRRTSQNVGSSFAAKVGGYLPKGVSEMWEPARDFAWIKLPKTNQTAGANGNAGSLRSVVAMSNNTPQVMVVTSDGNFYVFNIDLSKGGEGTLTKQYS.

WD repeat units follow at residues 1 to 36, 69 to 114, 185 to 225, and 230 to 269; these read MAMNFVTFNQDYSYLAVATSKGFRIFTTDPFAKSYE, KRQS…LLYT, AHRS…KLYQ, and SIPSRIYSMSFNTTSTLLCVSSSTETIHLFKLSHQTSSRE. Residues 226-230 carry the L/FRRG motif motif; the sequence is FRRGS. Positions 261–314 are disordered; sequence LSHQTSSREGSPSSALSRERAASQSSLGTSPDPDDPTDDMESSEIASRKHNGTL. Positions 262 to 289 are enriched in polar residues; it reads SHQTSSREGSPSSALSRERAASQSSLGT. Positions 292-302 are enriched in acidic residues; sequence DPDDPTDDMES. 2 WD repeats span residues 309 to 355 and 367 to 407; these read KHNG…AWIK and GNAG…GGEG.

The protein belongs to the WD repeat PROPPIN family. In terms of assembly, component of the PI(3,5)P2 regulatory complex.

It is found in the preautophagosomal structure membrane. Its subcellular location is the vacuole membrane. It localises to the endosome membrane. Its function is as follows. The PI(3,5)P2 regulatory complex regulates both the synthesis and turnover of phosphatidylinositol 3,5-bisphosphate (PtdIns(3,5)P2). Necessary for proper vacuole morphology. Plays an important role in osmotically-induced vacuole fragmentation. Required for cytoplasm to vacuole transport (Cvt) vesicle formation, pexophagy and starvation-induced autophagy. Involved in correct atg9 trafficking to the pre-autophagosomal structure. Might also be involved in premeiotic DNA replication. The sequence is that of Autophagy-related protein 18 (atg18) from Aspergillus terreus (strain NIH 2624 / FGSC A1156).